The chain runs to 500 residues: Phenylalanine--tRNA ligase alpha subunit (500 aa).

L-phenylalanine contacts are provided by residues T343, 382 to 384 (QVD), and F423. E425 provides a ligand contact to Mg(2+). F448 is a binding site for L-phenylalanine.

This sequence belongs to the class-II aminoacyl-tRNA synthetase family. Phe-tRNA synthetase alpha subunit type 2 subfamily. Tetramer of two alpha and two beta subunits. Mg(2+) is required as a cofactor.

The protein resides in the cytoplasm. The catalysed reaction is tRNA(Phe) + L-phenylalanine + ATP = L-phenylalanyl-tRNA(Phe) + AMP + diphosphate + H(+). The chain is Phenylalanine--tRNA ligase alpha subunit from Thermococcus onnurineus (strain NA1).